A 235-amino-acid chain; its full sequence is Ribonuclease 3 (235 aa).

An RNase III domain is found at 7-131 (LSALEARIGH…IIGAVFLDGG (125 aa)). Position 45 (Glu-45) interacts with Mg(2+). Asp-49 is a catalytic residue. 2 residues coordinate Mg(2+): Asp-117 and Glu-120. Residue Glu-120 is part of the active site. The region spanning 156 to 225 (DPKTTLQEWA…AAAFLTREKI (70 aa)) is the DRBM domain.

The protein belongs to the ribonuclease III family. In terms of assembly, homodimer. Mg(2+) is required as a cofactor.

The protein resides in the cytoplasm. The catalysed reaction is Endonucleolytic cleavage to 5'-phosphomonoester.. Digests double-stranded RNA. Involved in the processing of primary rRNA transcript to yield the immediate precursors to the large and small rRNAs (23S and 16S). Processes some mRNAs, and tRNAs when they are encoded in the rRNA operon. Processes pre-crRNA and tracrRNA of type II CRISPR loci if present in the organism. This Methylocella silvestris (strain DSM 15510 / CIP 108128 / LMG 27833 / NCIMB 13906 / BL2) protein is Ribonuclease 3.